The following is a 267-amino-acid chain: Non-structural protein NS-S (267 aa).

This sequence belongs to the phlebovirus NS-S protein family.

This is Non-structural protein NS-S (NSS) from Homo sapiens (Human).